The chain runs to 203 residues: Somatotropin (203 aa).

An N-terminal signal peptide occupies residues 1-17; the sequence is MNRVILLLSVMCVGVSS. Gln-18 carries the pyrrolidone carboxylic acid modification. 2 cysteine pairs are disulfide-bonded: Cys-68–Cys-176 and Cys-193–Cys-201.

This sequence belongs to the somatotropin/prolactin family.

The protein localises to the secreted. Functionally, growth hormone plays an important role in growth control and is involved in the regulation of several anabolic processes. Implicated as an osmoregulatory substance important for seawater adaptation. This Verasper variegatus (Spotted flounder) protein is Somatotropin (gh).